Reading from the N-terminus, the 300-residue chain is Phosphatidylglycerol--prolipoprotein diacylglyceryl transferase (300 aa).

The next 7 helical transmembrane spans lie at 17–37 (LAIR…LWFG), 59–79 (MLFY…VLFY), 94–114 (VWEG…AMML), 129–149 (FIAP…FING), 204–224 (SQIY…WLYA), 230–250 (MGAV…AAEF), and 265–285 (LSMG…MLVW). R142 contacts a 1,2-diacyl-sn-glycero-3-phospho-(1'-sn-glycerol).

This sequence belongs to the Lgt family.

Its subcellular location is the cell inner membrane. The catalysed reaction is L-cysteinyl-[prolipoprotein] + a 1,2-diacyl-sn-glycero-3-phospho-(1'-sn-glycerol) = an S-1,2-diacyl-sn-glyceryl-L-cysteinyl-[prolipoprotein] + sn-glycerol 1-phosphate + H(+). It functions in the pathway protein modification; lipoprotein biosynthesis (diacylglyceryl transfer). Functionally, catalyzes the transfer of the diacylglyceryl group from phosphatidylglycerol to the sulfhydryl group of the N-terminal cysteine of a prolipoprotein, the first step in the formation of mature lipoproteins. This is Phosphatidylglycerol--prolipoprotein diacylglyceryl transferase from Ralstonia pickettii (strain 12J).